The chain runs to 201 residues: Recombination protein RecR (201 aa).

A C4-type zinc finger spans residues 57–72 (CSDCRTFTEQDVCAIC). A Toprim domain is found at 81–176 (GLVCVVESPA…MASRIAHGVP (96 aa)).

Belongs to the RecR family.

Its function is as follows. May play a role in DNA repair. It seems to be involved in an RecBC-independent recombinational process of DNA repair. It may act with RecF and RecO. This is Recombination protein RecR from Pectobacterium atrosepticum (strain SCRI 1043 / ATCC BAA-672) (Erwinia carotovora subsp. atroseptica).